The chain runs to 671 residues: APC membrane recruitment protein 2 (671 aa).

Disordered regions lie at residues 1–24, 76–358, 391–414, and 444–598; these read METSRSRGGGGAVSERGGAGASVG, SGGT…SDPS, EAGPSCDKHVPGPGKPALSKKNPG, and SQTE…PLRT. Gly residues-rich tracts occupy residues 7–21 and 126–137; these read RGGGGAVSERGGAGA and GGDSGGGGGGRP. Ser162 is subject to Phosphoserine. Basic and acidic residues predominate over residues 171–182; sequence GRSENGKGEPVD. Residues Ser229 and Ser233 each carry the phosphoserine modification. Basic and acidic residues-rich tracts occupy residues 236-260, 276-286, and 295-307; these read CVKEETPRAAREPEEPSQDAPRDPA, APARSCREAEG, and ARGEDAAGHRRAE. Low complexity predominate over residues 342–353; that stretch reads APAAPDPASVDP. 2 positions are modified to phosphoserine: Ser355 and Ser358. Residues 447–458 show a composition bias toward low complexity; it reads EEQGPEPQEGAA. Composition is skewed to basic and acidic residues over residues 472 to 487 and 498 to 514; these read TPKDTRCVEAAKDASS and IEPHPKEEPKHPEKEQQ.

The protein belongs to the Amer family. Interacts with APC.

The protein localises to the cell membrane. In terms of biological role, negative regulator of the canonical Wnt signaling pathway involved in neuroectodermal patterning. Acts by specifically binding phosphatidylinositol 4,5-bisphosphate (PtdIns(4,5)P2), translocating to the cell membrane and interacting with key regulators of the canonical Wnt signaling pathway, such as components of the beta-catenin destruction complex. The sequence is that of APC membrane recruitment protein 2 (AMER2) from Homo sapiens (Human).